The primary structure comprises 299 residues: Acetylglutamate kinase (299 aa).

Residues 70 to 71, arginine 92, and asparagine 186 contribute to the substrate site; that span reads GG.

Belongs to the acetylglutamate kinase family. ArgB subfamily.

The protein resides in the cytoplasm. It carries out the reaction N-acetyl-L-glutamate + ATP = N-acetyl-L-glutamyl 5-phosphate + ADP. Its pathway is amino-acid biosynthesis; L-arginine biosynthesis; N(2)-acetyl-L-ornithine from L-glutamate: step 2/4. Functionally, catalyzes the ATP-dependent phosphorylation of N-acetyl-L-glutamate. In Thermoanaerobacter pseudethanolicus (strain ATCC 33223 / 39E) (Clostridium thermohydrosulfuricum), this protein is Acetylglutamate kinase.